The chain runs to 87 residues: Small ribosomal subunit protein bS20 (87 aa).

It belongs to the bacterial ribosomal protein bS20 family.

Functionally, binds directly to 16S ribosomal RNA. The sequence is that of Small ribosomal subunit protein bS20 from Clostridium perfringens (strain 13 / Type A).